Consider the following 99-residue polypeptide: SAGA-associated factor 11 (99 aa).

Residues phenylalanine 71–cysteine 92 form an SGF11-type zinc finger.

It belongs to the SGF11 family. Component of the 1.8 MDa SAGA transcription coactivator-HAT complex. SAGA is built of 5 distinct domains with specialized functions. Within the SAGA complex, SUS1, SGF11, SGF73 and UBP8 form an additional subcomplex of SAGA called the DUB module (deubiquitination module). Interacts directly with SGF73, SUS1 and UBP8.

Its subcellular location is the nucleus. Functionally, functions as a component of the transcription regulatory histone acetylation (HAT) complex SAGA. At the promoters, SAGA is required for recruitment of the basal transcription machinery. It influences RNA polymerase II transcriptional activity through different activities such as TBP interaction and promoter selectivity, interaction with transcription activators, and chromatin modification through histone acetylation and deubiquitination. SAGA acetylates nucleosomal histone H3 to some extent (to form H3K9ac, H3K14ac, H3K18ac and H3K23ac). SAGA interacts with DNA via upstream activating sequences (UASs). Involved in transcriptional regulation of a subset of SAGA-regulated genes. Within the SAGA complex, participates in a subcomplex, that specifically deubiquitinates histones H2B. The chain is SAGA-associated factor 11 from Candida glabrata (strain ATCC 2001 / BCRC 20586 / JCM 3761 / NBRC 0622 / NRRL Y-65 / CBS 138) (Yeast).